A 197-amino-acid polypeptide reads, in one-letter code: Transposon Tn552 resolvase (197 aa).

Residues 1–136 (MKIGYARVST…AGRIAARARG (136 aa)) enclose the Resolvase/invertase-type recombinase catalytic domain. Ser9 (O-(5'-phospho-DNA)-serine intermediate) is an active-site residue. A DNA-binding region (H-T-H motif) is located at residues 163-182 (IKTIAEQWQVSRTTIYRYLN).

This sequence belongs to the site-specific recombinase resolvase family.

Functionally, resolvase catalyzes the resolution (a site-specific recombination) of the cointegrated replicon to yield the final transposition products. This is Transposon Tn552 resolvase (tnpR) from Staphylococcus aureus.